Reading from the N-terminus, the 132-residue chain is Translation initiation factor 5A (132 aa).

Position 36 is a hypusine (Lys-36).

Belongs to the eIF-5A family.

It localises to the cytoplasm. Functionally, functions by promoting the formation of the first peptide bond. The sequence is that of Translation initiation factor 5A (eIF5A) from Thermofilum pendens (strain DSM 2475 / Hrk 5).